A 622-amino-acid chain; its full sequence is DNA-directed RNA polymerase subunit gamma (622 aa).

Cys-70, Cys-72, Cys-85, and Cys-88 together coordinate Zn(2+). Residues Asp-466, Asp-468, and Asp-470 each contribute to the Mg(2+) site.

This sequence belongs to the RNA polymerase beta' chain family. RpoC1 subfamily. As to quaternary structure, in cyanobacteria the RNAP catalytic core is composed of 2 alpha, 1 beta, 1 beta', 1 gamma and 1 omega subunit. When a sigma factor is associated with the core the holoenzyme is formed, which can initiate transcription. Requires Mg(2+) as cofactor. The cofactor is Zn(2+).

The enzyme catalyses RNA(n) + a ribonucleoside 5'-triphosphate = RNA(n+1) + diphosphate. DNA-dependent RNA polymerase catalyzes the transcription of DNA into RNA using the four ribonucleoside triphosphates as substrates. The polypeptide is DNA-directed RNA polymerase subunit gamma (Thermosynechococcus vestitus (strain NIES-2133 / IAM M-273 / BP-1)).